The chain runs to 283 residues: Nicotine 6-hydroxylase medium subunit (283 aa).

An FAD-binding PCMH-type domain is found at 1–176 (MKLPAIRYAS…TDVWIPSRPN (176 aa)). FAD is bound by residues 31–35 (AGGQS) and 110–114 (TLGGS).

As to quaternary structure, heterotrimer composed of a large subunit (NdhL), a medium subunit (NdhM) and a small subunit (NdhS). FAD serves as cofactor.

It localises to the cytoplasm. The catalysed reaction is (R)-nicotine + A + H2O = (R)-6-hydroxynicotine + AH2. The enzyme catalyses (S)-nicotine + A + H2O = (S)-6-hydroxynicotine + AH2. The protein operates within alkaloid degradation; nicotine degradation; 6-hydroxypseudooxynicotine from nicotine (R-isomer route): step 1/2. It functions in the pathway alkaloid degradation; nicotine degradation; 6-hydroxypseudooxynicotine from nicotine (S-isomer route): step 1/2. With respect to regulation, nicotine dehydrogenase activity is inhibited by tungsten. Component of the nicotine 6-hydroxylase, which is involved in the degradation of nicotine. Catalyzes the hydroxylation of the pyridine ring at C6 to form 6-hydroxynicotine. Can use both L-nicotine and D-nicotine. The protein is Nicotine 6-hydroxylase medium subunit of Paenarthrobacter nicotinovorans (Arthrobacter nicotinovorans).